Consider the following 1664-residue polypeptide: MYND-type zinc finger-containing chromatin reader Zmynd8 (1664 aa).

Low complexity-rich tracts occupy residues 1 to 16, 30 to 40, and 61 to 84; these read MESTDSSDSSGDSLKS, SPQPQLQSSSL, and SAPPGSANCSSNSSSSSPSNINVG. 3 disordered regions span residues 1–84, 251–271, and 295–323; these read MEST…INVG, SLSNSWSNDDKGPRRSNLRSE, and LALNTSGEGESSLFSDASDTKTTTAKTPE. The span at 258 to 271 shows a compositional bias: basic and acidic residues; that stretch reads NDDKGPRRSNLRSE. Polar residues predominate over residues 296–308; that stretch reads ALNTSGEGESSLF. Residues 309-320 show a composition bias toward low complexity; sequence SDASDTKTTTAK. The segment at 343–389 adopts a PHD-type zinc-finger fold; it reads DPFCWKCRGCGKLMPCSKCLRSFHSYCVRPATTKFDSSWKCPECQVI. Zn(2+) is bound by residues cysteine 346, cysteine 349, cysteine 358, cysteine 361, histidine 366, cysteine 369, cysteine 383, and cysteine 386. Residues 401-504 form the Bromo domain; sequence VSVDLLSQLL…KVCRQEANEI (104 aa). Zn(2+) is bound by residues cysteine 507, cysteine 510, and cysteine 525. In terms of domain architecture, PWWP spans 528–579; the sequence is PHLLLWAKLKGFPYWPAKAMGSSNSTLVNVRFFGKHDRAFVPVKDCFLYSAQ. Disordered regions lie at residues 672–693, 747–815, 857–905, and 919–1139; these read KTKATESGNESDQSPSPTKKLS, ESVE…QNEN, KIPR…RQQE, and TEVM…TNTS. Positions 676-690 are enriched in polar residues; sequence TESGNESDQSPSPTK. Basic residues predominate over residues 775-784; the sequence is HKRKSKHARK. Residues 785–800 show a composition bias toward basic and acidic residues; that stretch reads QHDNQDNQIEEAEKTG. The segment covering 874 to 884 has biased composition (pro residues); sequence IPLPTAPPPKQ. The span at 935-952 shows a compositional bias: polar residues; sequence PANQPQTDQVPLQQETIT. The span at 953 to 962 shows a compositional bias: low complexity; the sequence is AQPESQMPAA. The span at 1006 to 1019 shows a compositional bias: pro residues; that stretch reads PPMPLPMPPPPPLP. Over residues 1037-1053 the composition is skewed to polar residues; that stretch reads TTIQRVSQKQGGKSTDT. Residues 1073-1097 are compositionally biased toward low complexity; it reads SPTHSPLLSTAPSPSASPKPTSTLA. Zn(2+) is bound by residues cysteine 1399, cysteine 1402, cysteine 1410, cysteine 1411, cysteine 1417, cysteine 1421, histidine 1429, and cysteine 1433. An MYND-type zinc finger spans residues 1399–1433; it reads CANCMREAQLYCCWNTSYCDYPCQQLHWPGHSATC. The disordered stretch occupies residues 1613 to 1648; sequence VPKATGRSGKNNSRMRQTYSNNINNSNPQGMRCNNN. Polar residues predominate over residues 1620-1648; sequence SGKNNSRMRQTYSNNINNSNPQGMRCNNN.

It localises to the nucleus. It is found in the chromosome. In terms of biological role, chromatin reader that recognizes specific histone signatures to regulate transcription. Plays a role in neuronal development. This is MYND-type zinc finger-containing chromatin reader Zmynd8 from Drosophila melanogaster (Fruit fly).